A 592-amino-acid polypeptide reads, in one-letter code: MGEQLNGLKRTHMCGELTVEDVDKYVVVMGWVQRRRDHGGLVFIDLRDRTGIVQVVFSNEVSSEAFEKVQSVRSEYVLAIEGKVVKRSPENVNPKISTGEIEIYANTLKILSKSETPPFPIEDRSNVSEAVRLKYRYLDLRRPSMQKNLMTRFKITKVVRDFLNKNGFIEIETPLLIKSTPEGARDYLVPSRIYPGKFYALPQSPQIFKQLLMISGFDKYYQIAKCLRDEDLRADRQPEFTQIDIEMSFVEVEDVLKINEKMIAEIFKETLGIDVPIPFKRLSYQESMERFGTDKPDLRFGMELKDLSDIVAQSEFNVFKTALKNNGSVRGINVKGAASMPRRQLDELVEFAKTYGAKGLLWIQVFEKEVKSPATKFLSEEEMKKILERLEAEAGDLLLIVADKDEIVFDTLAHLRLELGKRFNLIDENKYEFVWIVDFPLLEYDEGEKRYVAKHHPFTAPKDEDIELLEKEPLKVRAKAYDIVLNGTEIGGGSIRIHDTELQKRMFKVLGFSEEKAWERFGFLMEAFKYGAPPHGGIAYGLDRLAMIITGSDTIRDVIAFPKTQNAVCLMTDAPSEVSEEQLKELHIKVDL.

An L-aspartate-binding site is contributed by Glu182. The interval 206–209 (QIFK) is aspartate. An L-aspartate-binding site is contributed by Arg228. ATP-binding positions include 228-230 (RDE) and Gln237. His455 serves as a coordination point for L-aspartate. Glu489 is a binding site for ATP. Residue Arg496 participates in L-aspartate binding. Residue 541–544 (GLDR) participates in ATP binding.

This sequence belongs to the class-II aminoacyl-tRNA synthetase family. Type 1 subfamily. As to quaternary structure, homodimer.

It localises to the cytoplasm. It carries out the reaction tRNA(Asx) + L-aspartate + ATP = L-aspartyl-tRNA(Asx) + AMP + diphosphate. Its function is as follows. Aspartyl-tRNA synthetase with relaxed tRNA specificity since it is able to aspartylate not only its cognate tRNA(Asp) but also tRNA(Asn). Reaction proceeds in two steps: L-aspartate is first activated by ATP to form Asp-AMP and then transferred to the acceptor end of tRNA(Asp/Asn). In Thermoanaerobacter sp. (strain X514), this protein is Aspartate--tRNA(Asp/Asn) ligase.